A 315-amino-acid polypeptide reads, in one-letter code: Neurogenic differentiation factor 4 (315 aa).

The segment at 39–71 (ERGSIDGEEDDEEEEDGEKPKKRGPKKKKMTKA) is disordered. A compositionally biased stretch (acidic residues) spans 44 to 55 (DGEEDDEEEEDG). Positions 58–70 (PKKRGPKKKKMTK) are enriched in basic residues. A bHLH domain is found at 78-130 (VRRVKANARERSRMHGLNDALENLRRVMPCYSKTQKLSKIETLRLARNYIWAL). At Ser-89 the chain carries Phosphoserine.

As to quaternary structure, efficient DNA binding requires dimerization with another bHLH protein. Forms a heterodimer with the bHLH protein hes2, and weakly interacts with hey1/hrt1. Serine or threonine phosphorylation within the basic region may regulate neurogenic activity. First expressed weakly at stage 12 in primary neuronal precursors. At stages 18 and 21, strongly expressed in the cranial ganglions, with weaker expression remaining in the spinal cord. Later, strongly expressed at sites of neuronal differentiation, namely the eye, forebrain and cranial ganglions.

The protein resides in the nucleus. Its function is as follows. Probably acts as a transcriptional activator. Mediates neuronal differentiation. Required for the regulation of amacrine cell fate specification in the retina. The sequence is that of Neurogenic differentiation factor 4 (neurod4) from Xenopus laevis (African clawed frog).